A 68-amino-acid polypeptide reads, in one-letter code: Cx9C motif-containing protein 4 (68 aa).

Positions 4-46 constitute a CHCH domain; the sequence is KDPCQKQACEIQKCLQANSYMESKCQAVIQELRKCCAQYPKGR. 2 short sequence motifs (cx9C motif) span residues 7 to 17 and 28 to 38; these read CQKQACEIQKC and CQAVIQELRKC. Intrachain disulfides connect C7–C38, C17–C28, and C39–C50.

The protein belongs to the CMC4 family. In terms of tissue distribution, expressed in many tissues with a relatively high level in skeletal muscle.

It is found in the mitochondrion. The sequence is that of Cx9C motif-containing protein 4 (CMC4) from Homo sapiens (Human).